We begin with the raw amino-acid sequence, 160 residues long: Small ribosomal subunit protein bS6 (160 aa).

Belongs to the bacterial ribosomal protein bS6 family.

In terms of biological role, binds together with bS18 to 16S ribosomal RNA. The polypeptide is Small ribosomal subunit protein bS6 (Ureaplasma parvum serovar 3 (strain ATCC 27815 / 27 / NCTC 11736)).